A 429-amino-acid polypeptide reads, in one-letter code: Dihydroorotase (429 aa).

Zn(2+) is bound by residues His61 and His63. Substrate-binding positions include 63–65 (HYR) and Asn95. Residues Asp153, His180, and His233 each contribute to the Zn(2+) site. Residue Asn279 coordinates substrate. Asp306 serves as a coordination point for Zn(2+). Residue Asp306 is part of the active site. Residues His310 and 324-325 (FG) each bind substrate.

This sequence belongs to the metallo-dependent hydrolases superfamily. DHOase family. Class I DHOase subfamily. Zn(2+) serves as cofactor.

It carries out the reaction (S)-dihydroorotate + H2O = N-carbamoyl-L-aspartate + H(+). Its pathway is pyrimidine metabolism; UMP biosynthesis via de novo pathway; (S)-dihydroorotate from bicarbonate: step 3/3. Catalyzes the reversible cyclization of carbamoyl aspartate to dihydroorotate. The sequence is that of Dihydroorotase from Ligilactobacillus salivarius (strain UCC118) (Lactobacillus salivarius).